A 215-amino-acid chain; its full sequence is Ribonuclease T (215 aa).

The Exonuclease domain maps to 20–194; sequence VVIDVETAGF…YDTMQTAKLF (175 aa). Mg(2+)-binding residues include Asp23, Glu25, His181, and Asp186. Catalysis depends on His181, which acts as the Proton donor/acceptor.

Belongs to the RNase T family. Homodimer. Mg(2+) is required as a cofactor.

In terms of biological role, trims short 3' overhangs of a variety of RNA species, leaving a one or two nucleotide 3' overhang. Responsible for the end-turnover of tRNA: specifically removes the terminal AMP residue from uncharged tRNA (tRNA-C-C-A). Also appears to be involved in tRNA biosynthesis. The sequence is that of Ribonuclease T from Yersinia enterocolitica serotype O:8 / biotype 1B (strain NCTC 13174 / 8081).